A 21-amino-acid chain; its full sequence is Serine protease inhibitor 1 (21 aa).

The 21-residue stretch at 1 to 21 folds into the Pacifastin domain; that stretch reads EQQCTPGQTKKEDCNNCTSGD. Residues 1-21 form a disordered region; it reads EQQCTPGQTKKEDCNNCTSGD.

This sequence belongs to the protease inhibitor I19 family. Expressed in hemolymph.

It is found in the secreted. Its function is as follows. Probable serine protease inhibitor. This is Serine protease inhibitor 1 from Melanoplus sanguinipes (Migratory grasshopper).